The chain runs to 173 residues: Glycine cleavage system H protein, mitochondrial (173 aa).

Residues 1-48 constitute a mitochondrion transit peptide; that stretch reads MALRAVRSVRAAVGGLRAISAPSAPCLPRPWGLRAGAVRELRTGPALL. Positions 66 to 148 constitute a Lipoyl-binding domain; it reads VGTVGISNFA…YEDGWLIKMT (83 aa). K107 is subject to N6-lipoyllysine.

It belongs to the GcvH family. Interacts with GLDC. The glycine cleavage system is composed of four proteins: P (GLDC), T (GCST), L (DLD) and H (GCSH). (R)-lipoate is required as a cofactor.

Its subcellular location is the mitochondrion. The glycine cleavage system catalyzes the degradation of glycine. The H protein (GCSH) shuttles the methylamine group of glycine from the P protein (GLDC) to the T protein (GCST). Has a pivotal role in the lipoylation of enzymes involved in cellular energetics such as the mitochondrial dihydrolipoyllysine-residue acetyltransferase component of pyruvate dehydrogenase complex (DLAT), and the mitochondrial dihydrolipoyllysine-residue succinyltransferase component of 2-oxoglutarate dehydrogenase complex (DLST). In Bos taurus (Bovine), this protein is Glycine cleavage system H protein, mitochondrial.